We begin with the raw amino-acid sequence, 245 residues long: tRNA pseudouridine synthase A (245 aa).

Asp-52 functions as the Nucleophile in the catalytic mechanism. Tyr-110 contacts substrate.

The protein belongs to the tRNA pseudouridine synthase TruA family. As to quaternary structure, homodimer.

The enzyme catalyses uridine(38/39/40) in tRNA = pseudouridine(38/39/40) in tRNA. Formation of pseudouridine at positions 38, 39 and 40 in the anticodon stem and loop of transfer RNAs. This is tRNA pseudouridine synthase A from Borrelia duttonii (strain Ly).